We begin with the raw amino-acid sequence, 90 residues long: Essential MCU regulator, mitochondrial (90 aa).

A helical membrane pass occupies residues 49-68 (GVLKLIFVSASSLYIGGLIA).

Belongs to the SMDT1/EMRE family.

The protein localises to the mitochondrion inner membrane. Its function is as follows. Essential regulatory subunit of the mitochondrial calcium uniporter (mcu-1) channel, a protein that mediates calcium uptake into mitochondria. The protein is Essential MCU regulator, mitochondrial of Caenorhabditis elegans.